We begin with the raw amino-acid sequence, 334 residues long: Holliday junction branch migration complex subunit RuvB (334 aa).

A large ATPase domain (RuvB-L) region spans residues 4 to 184 (ADRLIQPQLQ…FGIPLRLEFY (181 aa)). ATP-binding positions include Arg24, Gly65, Lys68, Thr69, Thr70, 131 to 133 (EDY), Arg174, Tyr184, and Arg221. Thr69 provides a ligand contact to Mg(2+). Residues 185-255 (NVKDLSTIVS…VAEHALDLLD (71 aa)) are small ATPAse domain (RuvB-S). Residues 258–334 (GEGFDYMDRK…YLHFGMIKPE (77 aa)) are head domain (RuvB-H). DNA contacts are provided by Arg294, Arg313, and Arg318.

The protein belongs to the RuvB family. Homohexamer. Forms an RuvA(8)-RuvB(12)-Holliday junction (HJ) complex. HJ DNA is sandwiched between 2 RuvA tetramers; dsDNA enters through RuvA and exits via RuvB. An RuvB hexamer assembles on each DNA strand where it exits the tetramer. Each RuvB hexamer is contacted by two RuvA subunits (via domain III) on 2 adjacent RuvB subunits; this complex drives branch migration. In the full resolvosome a probable DNA-RuvA(4)-RuvB(12)-RuvC(2) complex forms which resolves the HJ.

The protein localises to the cytoplasm. The enzyme catalyses ATP + H2O = ADP + phosphate + H(+). Functionally, the RuvA-RuvB-RuvC complex processes Holliday junction (HJ) DNA during genetic recombination and DNA repair, while the RuvA-RuvB complex plays an important role in the rescue of blocked DNA replication forks via replication fork reversal (RFR). RuvA specifically binds to HJ cruciform DNA, conferring on it an open structure. The RuvB hexamer acts as an ATP-dependent pump, pulling dsDNA into and through the RuvAB complex. RuvB forms 2 homohexamers on either side of HJ DNA bound by 1 or 2 RuvA tetramers; 4 subunits per hexamer contact DNA at a time. Coordinated motions by a converter formed by DNA-disengaged RuvB subunits stimulates ATP hydrolysis and nucleotide exchange. Immobilization of the converter enables RuvB to convert the ATP-contained energy into a lever motion, pulling 2 nucleotides of DNA out of the RuvA tetramer per ATP hydrolyzed, thus driving DNA branch migration. The RuvB motors rotate together with the DNA substrate, which together with the progressing nucleotide cycle form the mechanistic basis for DNA recombination by continuous HJ branch migration. Branch migration allows RuvC to scan DNA until it finds its consensus sequence, where it cleaves and resolves cruciform DNA. In Shewanella sp. (strain MR-7), this protein is Holliday junction branch migration complex subunit RuvB.